Consider the following 850-residue polypeptide: Protein translocase subunit SecA 2 (850 aa).

Residues Q83, 101-105, and D491 each bind ATP; that span reads GEGKT.

This sequence belongs to the SecA family. Monomer and homodimer. Part of the essential Sec protein translocation apparatus which comprises SecA, SecYEG and auxiliary proteins SecDF. Other proteins may also be involved.

Its subcellular location is the cell membrane. It is found in the cytoplasm. The catalysed reaction is ATP + H2O + cellular proteinSide 1 = ADP + phosphate + cellular proteinSide 2.. Part of the Sec protein translocase complex. Interacts with the SecYEG preprotein conducting channel. Has a central role in coupling the hydrolysis of ATP to the transfer of proteins into and across the cell membrane, serving as an ATP-driven molecular motor driving the stepwise translocation of polypeptide chains across the membrane. This is Protein translocase subunit SecA 2 from Mycolicibacterium vanbaalenii (strain DSM 7251 / JCM 13017 / BCRC 16820 / KCTC 9966 / NRRL B-24157 / PYR-1) (Mycobacterium vanbaalenii).